Here is a 315-residue protein sequence, read N- to C-terminus: Methionyl-tRNA formyltransferase (315 aa).

Serine 113–proline 116 lines the (6S)-5,6,7,8-tetrahydrofolate pocket.

This sequence belongs to the Fmt family.

It catalyses the reaction L-methionyl-tRNA(fMet) + (6R)-10-formyltetrahydrofolate = N-formyl-L-methionyl-tRNA(fMet) + (6S)-5,6,7,8-tetrahydrofolate + H(+). Attaches a formyl group to the free amino group of methionyl-tRNA(fMet). The formyl group appears to play a dual role in the initiator identity of N-formylmethionyl-tRNA by promoting its recognition by IF2 and preventing the misappropriation of this tRNA by the elongation apparatus. The polypeptide is Methionyl-tRNA formyltransferase (Shigella flexneri serotype 5b (strain 8401)).